A 70-amino-acid chain; its full sequence is ATP synthase subunit c (70 aa).

Helical transmembrane passes span 3–23 and 47–67; these read FIAA…GNGM and FIGV…AFML.

This sequence belongs to the ATPase C chain family. F-type ATPases have 2 components, F(1) - the catalytic core - and F(0) - the membrane proton channel. F(1) has five subunits: alpha(3), beta(3), gamma(1), delta(1), epsilon(1). F(0) has three main subunits: a(1), b(2) and c(10-14). The alpha and beta chains form an alternating ring which encloses part of the gamma chain. F(1) is attached to F(0) by a central stalk formed by the gamma and epsilon chains, while a peripheral stalk is formed by the delta and b chains.

It is found in the cell membrane. Its function is as follows. F(1)F(0) ATP synthase produces ATP from ADP in the presence of a proton or sodium gradient. F-type ATPases consist of two structural domains, F(1) containing the extramembraneous catalytic core and F(0) containing the membrane proton channel, linked together by a central stalk and a peripheral stalk. During catalysis, ATP synthesis in the catalytic domain of F(1) is coupled via a rotary mechanism of the central stalk subunits to proton translocation. In terms of biological role, key component of the F(0) channel; it plays a direct role in translocation across the membrane. A homomeric c-ring of between 10-14 subunits forms the central stalk rotor element with the F(1) delta and epsilon subunits. The protein is ATP synthase subunit c of Lacticaseibacillus casei (strain BL23) (Lactobacillus casei).